Consider the following 323-residue polypeptide: Thymidylate synthase (323 aa).

DUMP contacts are provided by residues arginine 21 and 172–173 (RR). Cysteine 192 (nucleophile) is an active-site residue. DUMP contacts are provided by residues 214-217 (RSND), asparagine 225, and 255-257 (HVY). Aspartate 217 is a (6R)-5,10-methylene-5,6,7,8-tetrahydrofolate binding site. Residue alanine 322 coordinates (6R)-5,10-methylene-5,6,7,8-tetrahydrofolate.

The protein belongs to the thymidylate synthase family. Bacterial-type ThyA subfamily. In terms of assembly, homodimer.

It localises to the cytoplasm. It catalyses the reaction dUMP + (6R)-5,10-methylene-5,6,7,8-tetrahydrofolate = 7,8-dihydrofolate + dTMP. It participates in pyrimidine metabolism; dTTP biosynthesis. Its function is as follows. Catalyzes the reductive methylation of 2'-deoxyuridine-5'-monophosphate (dUMP) to 2'-deoxythymidine-5'-monophosphate (dTMP) while utilizing 5,10-methylenetetrahydrofolate (mTHF) as the methyl donor and reductant in the reaction, yielding dihydrofolate (DHF) as a by-product. This enzymatic reaction provides an intracellular de novo source of dTMP, an essential precursor for DNA biosynthesis. The chain is Thymidylate synthase from Pseudomonas putida (strain ATCC 47054 / DSM 6125 / CFBP 8728 / NCIMB 11950 / KT2440).